Reading from the N-terminus, the 697-residue chain is MGERAGSPGTDQERKAGKHHYSYLSDFETPQSSGRSSLVSSSPASVRRKNPKRQTSDGQVHHQAPRKPSPKGLPNRKGVRVGFRSQSLNREPLRKDTDLVTKRILSARLLKINELQNEVSELQVKLAELLKENKSLKRLQYRQEKALNKFEDAENEISQLIFRHNNEITALKERLRKSQEKERATEKRVKDTESELFRTKFSLQKLKEISEARHLPERDDLAKKLVSAELKLDDTERRIKELSKNLELSTNSFQRQLLAERKRAYEAHDENKVLQKEVQRLYHKLKEKERELDIKNIYSNRLPKSSPNKEKELALRKNAACQSDFADLCTKGVQTMEDFKPEEYPLTPETIMCYENKWEEPGHLTLDLQSQKQDRHGEAGILNPIMEREEKFVTDEELHVVKQEVEKLEDEWEREELDKKQKEKASLLEREEKPEWETGRYQLGMYPIQNMDKLQGEEEERLKREMLLAKLNEIDRELQDSRNLKYPVLPLLPDFESKLHSPERSPKTYRFSESSERLFNGHHLQDISFSTPKGEGQNSGNVRSPASPNEFAFGSYVPSFAKTSERSNPFSQKSSFLDFQRNSMEKLSKDGVDLITRKEKKANLMEQLFGASGSSTISSKSSDPNSVASSKGDIDPLNFLPGNKGSRDQEHDEDEGFFLSEGRSFNPNRHRLKHADDKPAVKAADSVEDEIEEVALR.

The segment at methionine 1–arginine 90 is disordered. Phosphoserine is present on residues serine 7 and serine 45. The span at serine 32–serine 45 shows a compositional bias: low complexity. Coiled-coil stretches lie at residues arginine 103–isoleucine 297 and glutamate 389–lysine 485. Disordered stretches follow at residues tryptophan 412–glutamate 432, histidine 522–proline 548, and glutamate 606–arginine 697. Positions glutamate 416–glutamate 432 are enriched in basic and acidic residues. The segment covering isoleucine 527–serine 547 has biased composition (polar residues). Residues serine 612–serine 626 are compositionally biased toward low complexity. The segment covering serine 686–arginine 697 has biased composition (acidic residues).

Belongs to the LCA5 family. As to quaternary structure, interacts with NINL. Interacts with OFD1. Interacts with FAM161A. Interacts with components of the IFT complex B. Widely expressed.

Its subcellular location is the cytoplasm. The protein localises to the cytoskeleton. The protein resides in the cilium axoneme. It localises to the cilium basal body. It is found in the microtubule organizing center. Its subcellular location is the centrosome. The protein localises to the cell projection. The protein resides in the cilium. Its function is as follows. Involved in intraflagellar protein (IFT) transport in photoreceptor cilia. This chain is Lebercilin (LCA5), found in Homo sapiens (Human).